The chain runs to 632 residues: DNA gyrase subunit B (632 aa).

The Toprim domain maps to 419 to 533; the sequence is RELFIVEGES…SGYLYIAQPP (115 aa). Residues Glu-425, Asp-498, and Asp-500 each coordinate Mg(2+).

The protein belongs to the type II topoisomerase GyrB family. As to quaternary structure, heterotetramer, composed of two GyrA and two GyrB chains. In the heterotetramer, GyrA contains the active site tyrosine that forms a transient covalent intermediate with DNA, while GyrB binds cofactors and catalyzes ATP hydrolysis. Mg(2+) is required as a cofactor. Requires Mn(2+) as cofactor. Ca(2+) serves as cofactor.

The protein resides in the cytoplasm. The enzyme catalyses ATP-dependent breakage, passage and rejoining of double-stranded DNA.. In terms of biological role, a type II topoisomerase that negatively supercoils closed circular double-stranded (ds) DNA in an ATP-dependent manner to modulate DNA topology and maintain chromosomes in an underwound state. Negative supercoiling favors strand separation, and DNA replication, transcription, recombination and repair, all of which involve strand separation. Also able to catalyze the interconversion of other topological isomers of dsDNA rings, including catenanes and knotted rings. Type II topoisomerases break and join 2 DNA strands simultaneously in an ATP-dependent manner. This Archaeoglobus fulgidus (strain ATCC 49558 / DSM 4304 / JCM 9628 / NBRC 100126 / VC-16) protein is DNA gyrase subunit B.